A 351-amino-acid chain; its full sequence is DNA polymerase IV (351 aa).

Residues 4–185 (IIHVDMDCFF…LPLAKIPGVG (182 aa)) form the UmuC domain. Residues aspartate 8 and aspartate 103 each contribute to the Mg(2+) site. Residue glutamate 104 is part of the active site.

The protein belongs to the DNA polymerase type-Y family. Monomer. Requires Mg(2+) as cofactor.

Its subcellular location is the cytoplasm. It carries out the reaction DNA(n) + a 2'-deoxyribonucleoside 5'-triphosphate = DNA(n+1) + diphosphate. Poorly processive, error-prone DNA polymerase involved in untargeted mutagenesis. Copies undamaged DNA at stalled replication forks, which arise in vivo from mismatched or misaligned primer ends. These misaligned primers can be extended by PolIV. Exhibits no 3'-5' exonuclease (proofreading) activity. May be involved in translesional synthesis, in conjunction with the beta clamp from PolIII. The protein is DNA polymerase IV of Escherichia coli O1:K1 / APEC.